The primary structure comprises 134 residues: MWSDPIADMLTRIRNANMVFKEYTDIPASNLKKKICEILKREGFIADYKYIEDGKQGILRVYLKYKGGRKNRERVIHGIVRVSHAGRRIYVDKDHIPKVKNGLGIAILTTSKGVLTDKEARQLGVGGEVIAYVW.

The protein belongs to the universal ribosomal protein uS8 family. In terms of assembly, part of the 30S ribosomal subunit. Contacts proteins S5 and S12.

Its function is as follows. One of the primary rRNA binding proteins, it binds directly to 16S rRNA central domain where it helps coordinate assembly of the platform of the 30S subunit. The protein is Small ribosomal subunit protein uS8 of Thermotoga maritima (strain ATCC 43589 / DSM 3109 / JCM 10099 / NBRC 100826 / MSB8).